We begin with the raw amino-acid sequence, 161 residues long: Peptidyl-prolyl cis-trans isomerase-like 1 (161 aa).

The PPIase cyclophilin-type domain occupies 1-155 (MATDVVFDTS…DEVKIIRAKV (155 aa)).

Belongs to the cyclophilin-type PPIase family. PPIL1 subfamily.

The enzyme catalyses [protein]-peptidylproline (omega=180) = [protein]-peptidylproline (omega=0). Its function is as follows. PPIases accelerate the folding of proteins. It catalyzes the cis-trans isomerization of proline imidic peptide bonds in oligopeptides. The sequence is that of Peptidyl-prolyl cis-trans isomerase-like 1 (cyp1) from Aspergillus fumigatus (strain ATCC MYA-4609 / CBS 101355 / FGSC A1100 / Af293) (Neosartorya fumigata).